A 454-amino-acid chain; its full sequence is Asparagine--tRNA ligase (454 aa).

The protein belongs to the class-II aminoacyl-tRNA synthetase family. Homodimer.

The protein resides in the cytoplasm. The enzyme catalyses tRNA(Asn) + L-asparagine + ATP = L-asparaginyl-tRNA(Asn) + AMP + diphosphate + H(+). The chain is Asparagine--tRNA ligase from Ureaplasma parvum serovar 3 (strain ATCC 27815 / 27 / NCTC 11736).